The primary structure comprises 902 residues: Nitrate reductase [NADPH] (902 aa).

Cys-182 provides a ligand contact to Mo-molybdopterin. The region spanning 537-612 (LPLIFADEVA…LKKYCIGRCS (76 aa)) is the Cytochrome b5 heme-binding domain. Positions 572 and 595 each coordinate heme. In terms of domain architecture, FAD-binding FR-type spans 637-751 (RTKVPIVLIS…KGPLGHFTYY (115 aa)). FAD is bound by residues 689 to 692 (RAYT), 708 to 712 (LIKVY), Phe-713, 725 to 727 (LFS), and Thr-778. Position 872–879 (872–879 (CMCGPEGM)) interacts with NADP(+).

This sequence belongs to the nitrate reductase family. In terms of assembly, homodimer. It depends on FAD as a cofactor. The cofactor is heme. Mo-molybdopterin serves as cofactor.

It catalyses the reaction nitrite + NADP(+) + H2O = nitrate + NADPH + H(+). Its function is as follows. Nitrate reductase is a key enzyme involved in the first step of nitrate assimilation in plants, fungi and bacteria. The sequence is that of Nitrate reductase [NADPH] (NIAA) from Phytophthora infestans (Potato late blight agent).